The following is a 360-amino-acid chain: Membrane-bound lytic murein transglycosylase C (360 aa).

The first 16 residues, 1–16 (MKKLLALAVIAPLLIS), serve as a signal peptide directing secretion. The N-palmitoyl cysteine moiety is linked to residue Cys17. A lipid anchor (S-diacylglycerol cysteine) is attached at Cys17.

The protein belongs to the transglycosylase Slt family.

It is found in the cell outer membrane. The catalysed reaction is Exolytic cleavage of the (1-&gt;4)-beta-glycosidic linkage between N-acetylmuramic acid (MurNAc) and N-acetylglucosamine (GlcNAc) residues in peptidoglycan, from either the reducing or the non-reducing ends of the peptidoglycan chains, with concomitant formation of a 1,6-anhydrobond in the MurNAc residue.. Functionally, murein-degrading enzyme. May play a role in recycling of muropeptides during cell elongation and/or cell division. The polypeptide is Membrane-bound lytic murein transglycosylase C (Salmonella typhi).